Reading from the N-terminus, the 247-residue chain is PF03932 family protein CutC (247 aa).

Belongs to the CutC family.

Its subcellular location is the cytoplasm. The sequence is that of PF03932 family protein CutC from Vibrio parahaemolyticus serotype O3:K6 (strain RIMD 2210633).